Consider the following 341-residue polypeptide: Phenylalanine--tRNA ligase alpha subunit (341 aa).

Residue glutamate 254 coordinates Mg(2+).

It belongs to the class-II aminoacyl-tRNA synthetase family. Phe-tRNA synthetase alpha subunit type 1 subfamily. In terms of assembly, tetramer of two alpha and two beta subunits. Mg(2+) serves as cofactor.

The protein localises to the cytoplasm. It carries out the reaction tRNA(Phe) + L-phenylalanine + ATP = L-phenylalanyl-tRNA(Phe) + AMP + diphosphate + H(+). The polypeptide is Phenylalanine--tRNA ligase alpha subunit (pheS) (Mycoplasma genitalium (strain ATCC 33530 / DSM 19775 / NCTC 10195 / G37) (Mycoplasmoides genitalium)).